The following is a 267-amino-acid chain: Type III pantothenate kinase (267 aa).

6-13 (DSGNSRLK) contacts ATP. Residues Y96 and 103–106 (GADR) each bind substrate. D105 (proton acceptor) is an active-site residue. Position 131 (T131) interacts with ATP. T181 lines the substrate pocket.

This sequence belongs to the type III pantothenate kinase family. In terms of assembly, homodimer. NH4(+) serves as cofactor. The cofactor is K(+).

It is found in the cytoplasm. The enzyme catalyses (R)-pantothenate + ATP = (R)-4'-phosphopantothenate + ADP + H(+). The protein operates within cofactor biosynthesis; coenzyme A biosynthesis; CoA from (R)-pantothenate: step 1/5. In terms of biological role, catalyzes the phosphorylation of pantothenate (Pan), the first step in CoA biosynthesis. The protein is Type III pantothenate kinase of Bordetella bronchiseptica (strain ATCC BAA-588 / NCTC 13252 / RB50) (Alcaligenes bronchisepticus).